Consider the following 307-residue polypeptide: Probable deoxyhypusine synthase (307 aa).

Catalysis depends on lysine 278, which acts as the Nucleophile.

Belongs to the deoxyhypusine synthase family. The cofactor is NAD(+).

It carries out the reaction [eIF5A protein]-L-lysine + spermidine = [eIF5A protein]-deoxyhypusine + propane-1,3-diamine. The protein operates within protein modification; eIF5A hypusination. Functionally, catalyzes the NAD-dependent oxidative cleavage of spermidine and the subsequent transfer of the butylamine moiety of spermidine to the epsilon-amino group of a specific lysine residue of the eIF-5A precursor protein to form the intermediate deoxyhypusine residue. This is Probable deoxyhypusine synthase (dys) from Methanothermobacter thermautotrophicus (strain ATCC 29096 / DSM 1053 / JCM 10044 / NBRC 100330 / Delta H) (Methanobacterium thermoautotrophicum).